A 138-amino-acid polypeptide reads, in one-letter code: Small ribosomal subunit protein uS11B (138 aa).

The interval 118-138 (DVTPVPSDSTRKKGGRRGRRL) is disordered. Over residues 129–138 (KKGGRRGRRL) the composition is skewed to basic residues.

It belongs to the universal ribosomal protein uS11 family. In terms of assembly, component of the small ribosomal subunit (SSU). Mature yeast ribosomes consist of a small (40S) and a large (60S) subunit. The 40S small subunit contains 1 molecule of ribosomal RNA (18S rRNA) and 33 different proteins (encoded by 57 genes). The large 60S subunit contains 3 rRNA molecules (25S, 5.8S and 5S rRNA) and 46 different proteins (encoded by 81 genes). uS11 interacts with eS1 forming part of the mRNA exit tunnel. uS11 interacts with snoRNA U3. uS11 interacts with MPP10. Component of the ribosomal small subunit (SSU) processome composed of at least 40 protein subunits and snoRNA U3.

The protein localises to the cytoplasm. The protein resides in the nucleus. Its subcellular location is the nucleolus. Functionally, component of the ribosome, a large ribonucleoprotein complex responsible for the synthesis of proteins in the cell. The small ribosomal subunit (SSU) binds messenger RNAs (mRNAs) and translates the encoded message by selecting cognate aminoacyl-transfer RNA (tRNA) molecules. The large subunit (LSU) contains the ribosomal catalytic site termed the peptidyl transferase center (PTC), which catalyzes the formation of peptide bonds, thereby polymerizing the amino acids delivered by tRNAs into a polypeptide chain. The nascent polypeptides leave the ribosome through a tunnel in the LSU and interact with protein factors that function in enzymatic processing, targeting, and the membrane insertion of nascent chains at the exit of the ribosomal tunnel. uS11 is involved in nucleolar processing of pre-18S ribosomal RNA and ribosome assembly. This chain is Small ribosomal subunit protein uS11B, found in Saccharomyces cerevisiae (strain ATCC 204508 / S288c) (Baker's yeast).